The sequence spans 556 residues: Inositol 1,4,5-trisphosphate receptor-interacting protein (556 aa).

Residues 1-15 form the signal peptide; it reads MALGLFRVCLVVVTA. The Extracellular segment spans residues 16–88; sequence IINHPLLFPR…EGQQQNESRT (73 aa). N-linked (GlcNAc...) asparagine glycosylation is found at Asn-27 and Asn-84. Residues 32-87 are a coiled coil; sequence ENEEEIIRQMQAHQEKLQLEQLRLEEEMARLAADKEAEKEALERVAEEGQQQNESR. The helical transmembrane segment at 89-107 threads the bilayer; it reads AWDLWSTLCMILFLVIEVW. The Cytoplasmic segment spans residues 108–556; the sequence is RQDHQDAPSP…ASLPPKTVIL (449 aa).

This sequence belongs to the ITPRIP family. Interacts with ITPR.

The protein localises to the cell membrane. Its subcellular location is the nucleus outer membrane. Enhances Ca(2+)-mediated inhibition of inositol 1,4,5-triphosphate receptor (ITPR) Ca(2+) release. The sequence is that of Inositol 1,4,5-trisphosphate receptor-interacting protein (ITPRIP) from Bos taurus (Bovine).